We begin with the raw amino-acid sequence, 257 residues long: Thiazole synthase (257 aa).

The active-site Schiff-base intermediate with DXP is K95. 1-deoxy-D-xylulose 5-phosphate is bound by residues G156, 182–183 (AG), and 204–205 (NT).

The protein belongs to the ThiG family. As to quaternary structure, homotetramer. Forms heterodimers with either ThiH or ThiS.

The protein localises to the cytoplasm. It catalyses the reaction [ThiS sulfur-carrier protein]-C-terminal-Gly-aminoethanethioate + 2-iminoacetate + 1-deoxy-D-xylulose 5-phosphate = [ThiS sulfur-carrier protein]-C-terminal Gly-Gly + 2-[(2R,5Z)-2-carboxy-4-methylthiazol-5(2H)-ylidene]ethyl phosphate + 2 H2O + H(+). It participates in cofactor biosynthesis; thiamine diphosphate biosynthesis. Catalyzes the rearrangement of 1-deoxy-D-xylulose 5-phosphate (DXP) to produce the thiazole phosphate moiety of thiamine. Sulfur is provided by the thiocarboxylate moiety of the carrier protein ThiS. In vitro, sulfur can be provided by H(2)S. The chain is Thiazole synthase from Fusobacterium nucleatum subsp. nucleatum (strain ATCC 25586 / DSM 15643 / BCRC 10681 / CIP 101130 / JCM 8532 / KCTC 2640 / LMG 13131 / VPI 4355).